We begin with the raw amino-acid sequence, 1513 residues long: Mucin-2 (1513 aa).

The first 20 residues, Met-1–Gly-20, serve as a signal peptide directing secretion. Residues His-32–Glu-204 enclose the VWFD 1 domain. 28 disulfides stabilise this stretch: Cys-34–Cys-166, Cys-56–Cys-203, Cys-64–Cys-163, Cys-215–Cys-252, Cys-222–Cys-247, Cys-234–Cys-272, Cys-254–Cys-260, Cys-262–Cys-288, Cys-292–Cys-326, Cys-309–Cys-348, Cys-328–Cys-342, Cys-350–Cys-372, Cys-367–Cys-384, Cys-370–Cys-379, Cys-388–Cys-525, Cys-410–Cys-560, Cys-432–Cys-440, Cys-571–Cys-616, Cys-585–Cys-611, Cys-598–Cys-636, Cys-618–Cys-624, Cys-626–Cys-651, Cys-658–Cys-695, Cys-671–Cys-685, Cys-675–Cys-715, Cys-697–Cys-709, Cys-717–Cys-739, and Cys-737–Cys-746. Asp-46 is a binding site for Ca(2+). Met-143 and Met-151 together coordinate Cu(+). Glu-153 provides a ligand contact to Cu(2+). N-linked (GlcNAc...) asparagine glycosylation occurs at Asn-160. Ca(2+)-binding residues include Asp-168, Asn-170, and Glu-177. His-274 and His-321 together coordinate Cu(2+). Residues Cys-292–Cys-348 form the TIL domain. Residue Met-323 coordinates Cu(+). Residues Cys-350–Cys-410 enclose the VWFC domain. The VWFD 2 domain occupies Glu-386–His-561. Asp-400 serves as a coordination point for Ca(2+). The N-linked (GlcNAc...) asparagine glycan is linked to Asn-420. Residues Asn-527, Asn-529, Leu-531, Asp-534, and Asp-535 each coordinate Ca(2+). N-linked (GlcNAc...) asparagine glycosylation occurs at Asn-667. Residue Asn-767 is glycosylated (N-linked (GlcNAc...) asparagine). Intrachain disulfides connect Cys-781–Cys-817, Cys-799–Cys-811, Cys-819–Cys-842, Cys-836–Cys-854, Cys-840–Cys-849, Cys-858–Cys-989, Cys-880–Cys-1024, Cys-889–Cys-986, Cys-906–Cys-913, Cys-1034–Cys-1077, Cys-1048–Cys-1072, Cys-1059–Cys-1099, Cys-1079–Cys-1087, Cys-1089–Cys-1114, Cys-1105–Cys-1134, Cys-1118–Cys-1160, Cys-1142–Cys-1184, Cys-1164–Cys-1178, Cys-1186–Cys-1210, Cys-1205–Cys-1235, and Cys-1208–Cys-1218. Asn-837 is a glycosylation site (N-linked (GlcNAc...) asparagine). The VWFD 3 domain maps to Ser-856–Pro-1025. Asp-870 provides a ligand contact to Ca(2+). The N-linked (GlcNAc...) asparagine glycan is linked to Asn-892. 4 residues coordinate Ca(2+): Asn-991, Asp-993, Asn-998, and Asp-999. 2 N-linked (GlcNAc...) asparagine glycosylation sites follow: Asn-1136 and Asn-1151. 3 N-linked (GlcNAc...) asparagine glycosylation sites follow: Asn-1212, Asn-1227, and Asn-1243. Thr-1264, Thr-1267, Thr-1268, and Thr-1280 each carry an O-linked (GalNAc) threonine glycan. O-linked (GalNAc) serine glycosylation occurs at Ser-1286. O-linked (GalNAc) threonine glycosylation occurs at Thr-1290. Ca(2+) contacts are provided by Asn-1303, His-1306, Ser-1309, Gly-1313, Asp-1314, and Glu-1316. The N-linked (GlcNAc...) asparagine glycan is linked to Asn-1350. Ca(2+)-binding residues include Asp-1373 and Tyr-1374. 11 consecutive repeat copies span residues Ser-1392 to Ser-1407, Ser-1408 to Thr-1423, Ser-1424 to Val-1434, Ser-1435 to Thr-1445, Ser-1446 to Thr-1456, Ser-1457 to Pro-1467, Ser-1468 to Pro-1478, Ser-1479 to Pro-1489, Ser-1490 to Thr-1500, Ser-1501 to Thr-1511, and Ser-1512 to Pro-1513. The segment at Ser-1392 to Pro-1513 is approximate repeats. The disordered stretch occupies residues Ser-1392 to Pro-1513.

In terms of assembly, homomultimer; disulfide-linked. The N- and C-terminus mediate their assembly into higher order structures to form filaments. The CTCK domains of two polypeptides associate in the endoplasmic reticulum to generate intermolecularly disulfide-bonded dimers. These dimers progress to the Golgi apparatus, which is a more acidic environment than the endoplasmic reticulum. Under acidic conditions, the N-termini form non-covalent intermolecular interactions that juxtapose assemblies of the third VWD domain (VWD3) from different CTCK-linked dimers. The VWD3 assemblies then become disulfide bonded to one another to produce long, disulfide-linked polymers that remain highly compact until secretion. Interacts with FCGBP. Interacts with AGR2; disulfide-linked. In terms of processing, O-glycosylated. O-glycosylation is required for mucin assembly. Goblet cells synthesize two forms of mucin that differ in branched chain O-glycosylation and the site of production in the colon. May undergo proteolytic cleavage in the outer mucus layer of the colon, contributing to the expanded volume and loose nature of this layer which allows for bacterial colonization in contrast to the inner mucus layer which is dense and devoid of bacteria. Post-translationally, at low pH of 6 and under, undergoes autocatalytic cleavage in vitro in the N-terminal region of the fourth VWD domain. It is likely that this also occurs in vivo and is triggered by the low pH of the late secretory pathway. As to expression, expressed in intestine and airway.

It localises to the secreted. Its function is as follows. Coats the epithelia of the intestines and other mucus membrane-containing organs to provide a protective, lubricating barrier against particles and infectious agents at mucosal surfaces. Major constituent of the colon mucus, which is mainly formed by large polymeric networks of MUC2 secreted by goblet cells that cover the exposed surfaces of intestine. MUC2 networks form hydrogels that guard the underlying epithelium from pathogens and other hazardous matter entering from the outside world, while permitting nutrient absorption and gas exchange. Acts as a divalent copper chaperone that protects intestinal cells from copper toxicity and facilitates nutritional copper unptake into cells. Binds both Cu(2+) and its reduced form, Cu(1+), at two juxtaposed binding sites: Cu(2+), once reduced to Cu(1+) by vitamin C (ascorbate) or other dietary antioxidants, transits to the other binding site. MUC2-bound Cu(1+) is protected from oxidation in aerobic environments, and can be released for nutritional delivery to cells. Mucin gels store antimicrobial molecules that participate in innate immunity. Mucin glycoproteins also house and feed the microbiome, lubricate tissue surfaces, and may facilitate the removal of contaminants and waste products from the body. Goblet cells synthesize two forms of MUC2 mucin that differ in branched chain O-glycosylation and the site of production in the colon: a (1) 'thick' mucus that wraps the microbiota to form fecal pellets is produced in the proximal, ascending colon. 'Thick' mucus transits along the descending colon and is lubricated by a (2) 'thin' MUC2 mucus produced in the distal colon which adheres to the 'thick' mucus. The protein is Mucin-2 of Rattus norvegicus (Rat).